The chain runs to 164 residues: Protein-export protein SecB (164 aa).

The protein belongs to the SecB family. In terms of assembly, homotetramer, a dimer of dimers. One homotetramer interacts with 1 SecA dimer.

It localises to the cytoplasm. In terms of biological role, one of the proteins required for the normal export of preproteins out of the cell cytoplasm. It is a molecular chaperone that binds to a subset of precursor proteins, maintaining them in a translocation-competent state. It also specifically binds to its receptor SecA. In Ruegeria sp. (strain TM1040) (Silicibacter sp.), this protein is Protein-export protein SecB.